We begin with the raw amino-acid sequence, 217 residues long: Deoxyribose-phosphate aldolase 1 (217 aa).

The active-site Proton donor/acceptor is D89. Catalysis depends on K151, which acts as the Schiff-base intermediate with acetaldehyde. K180 acts as the Proton donor/acceptor in catalysis.

The protein belongs to the DeoC/FbaB aldolase family. DeoC type 1 subfamily.

It localises to the cytoplasm. It carries out the reaction 2-deoxy-D-ribose 5-phosphate = D-glyceraldehyde 3-phosphate + acetaldehyde. The protein operates within carbohydrate degradation; 2-deoxy-D-ribose 1-phosphate degradation; D-glyceraldehyde 3-phosphate and acetaldehyde from 2-deoxy-alpha-D-ribose 1-phosphate: step 2/2. Catalyzes a reversible aldol reaction between acetaldehyde and D-glyceraldehyde 3-phosphate to generate 2-deoxy-D-ribose 5-phosphate. This is Deoxyribose-phosphate aldolase 1 from Cutibacterium acnes (strain DSM 16379 / KPA171202) (Propionibacterium acnes).